The primary structure comprises 918 residues: Isoleucine--tRNA ligase 1 (918 aa).

The short motif at 57 to 67 is the 'HIGH' region element; that stretch reads PYANGDIHIGH. Glutamate 553 lines the L-isoleucyl-5'-AMP pocket. The short motif at 594–598 is the 'KMSKS' region element; it reads KMSKS. Lysine 597 provides a ligand contact to ATP. The Zn(2+) site is built by cysteine 885, cysteine 888, cysteine 905, and cysteine 908.

It belongs to the class-I aminoacyl-tRNA synthetase family. IleS type 1 subfamily. In terms of assembly, monomer. It depends on Zn(2+) as a cofactor.

Its subcellular location is the cytoplasm. The enzyme catalyses tRNA(Ile) + L-isoleucine + ATP = L-isoleucyl-tRNA(Ile) + AMP + diphosphate. Its function is as follows. Catalyzes the attachment of isoleucine to tRNA(Ile). As IleRS can inadvertently accommodate and process structurally similar amino acids such as valine, to avoid such errors it has two additional distinct tRNA(Ile)-dependent editing activities. One activity is designated as 'pretransfer' editing and involves the hydrolysis of activated Val-AMP. The other activity is designated 'posttransfer' editing and involves deacylation of mischarged Val-tRNA(Ile). The sequence is that of Isoleucine--tRNA ligase 1 from Oceanobacillus iheyensis (strain DSM 14371 / CIP 107618 / JCM 11309 / KCTC 3954 / HTE831).